Reading from the N-terminus, the 290-residue chain is O-methyltransferase agiB (290 aa).

Asp-155 serves as a coordination point for S-adenosyl-L-methionine. His-194 (proton acceptor) is an active-site residue.

It belongs to the class I-like SAM-binding methyltransferase superfamily. Cation-independent O-methyltransferase family.

It participates in secondary metabolite biosynthesis. In terms of biological role, O-methyltransferase; part of the gene cluster that mediates the biosynthesis of the aspergillicins A and F, 2 cryptic cyclic hexa-depsipeptides. The hexamodular NRPS agiA catalyzes the condensation of the six amino acid residues including N-Me-L-O-Me-tyrosine, L-proline 1, L-proline 2, D-isoleucine, O-acetyl-threonine, and L-isoleucine. The starting condensation domain (C1) of agiA probably loads acetyl-CoA which is condensed on the N-terminus of threonine by the first module to yield O-acetyl-threonine. The second module then loads L-isoleucine. The epimerase (E) domain on module 2 is probably involved in the formation of the D-isoleucine moiety. Modules 3 and 4 further load 2 successive L-prolines. Module 5 is then involved in the condensation of O-Me-L-tyrosine produced by the O-methyltransferase agiB and the N-methyl transferase (NMeT) domain on module 5 probably catalyzes the N-methylation to yield the N-Me-L-O-Me-tyrosine moiety. The A domain of module 5 loads preferentially O-Me-L-tyrosine, but it can also accept L-phenylalanine, which leads to the production of aspergillicin G. Module 6 then loads the last residue, L-isoleucine. The C-terminal thiolesterase (TE) domain probably cyclizes the peptide using the hydroxy group from threonine to form the cyclic depsipeptide. The chain is O-methyltransferase agiB from Aspergillus flavus (strain ATCC 200026 / FGSC A1120 / IAM 13836 / NRRL 3357 / JCM 12722 / SRRC 167).